Here is a 155-residue protein sequence, read N- to C-terminus: Large ribosomal subunit protein uL22 (155 aa).

This sequence belongs to the universal ribosomal protein uL22 family. In terms of assembly, part of the 50S ribosomal subunit.

This protein binds specifically to 23S rRNA. It makes multiple contacts with different domains of the 23S rRNA in the assembled 50S subunit and ribosome. In terms of biological role, the globular domain of the protein is located near the polypeptide exit tunnel on the outside of the subunit, while an extended beta-hairpin is found that lines the wall of the exit tunnel in the center of the 70S ribosome. In Pyrococcus furiosus (strain ATCC 43587 / DSM 3638 / JCM 8422 / Vc1), this protein is Large ribosomal subunit protein uL22.